The following is a 243-amino-acid chain: Ribosomal RNA small subunit methyltransferase J (243 aa).

Residues 112-113 (ER) and aspartate 164 contribute to the S-adenosyl-L-methionine site.

The protein belongs to the methyltransferase superfamily. RsmJ family.

It is found in the cytoplasm. The enzyme catalyses guanosine(1516) in 16S rRNA + S-adenosyl-L-methionine = N(2)-methylguanosine(1516) in 16S rRNA + S-adenosyl-L-homocysteine + H(+). Functionally, specifically methylates the guanosine in position 1516 of 16S rRNA. The sequence is that of Ribosomal RNA small subunit methyltransferase J from Legionella pneumophila (strain Paris).